Here is a 316-residue protein sequence, read N- to C-terminus: Acetylglutamate kinase (316 aa).

Substrate is bound by residues glycine 65 to glycine 66, arginine 87, and asparagine 179.

It belongs to the acetylglutamate kinase family. ArgB subfamily.

Its subcellular location is the cytoplasm. The catalysed reaction is N-acetyl-L-glutamate + ATP = N-acetyl-L-glutamyl 5-phosphate + ADP. It participates in amino-acid biosynthesis; L-arginine biosynthesis; N(2)-acetyl-L-ornithine from L-glutamate: step 2/4. In terms of biological role, catalyzes the ATP-dependent phosphorylation of N-acetyl-L-glutamate. This is Acetylglutamate kinase from Alkaliphilus metalliredigens (strain QYMF).